We begin with the raw amino-acid sequence, 211 residues long: Small ribosomal subunit protein uS3 (211 aa).

In terms of domain architecture, KH type-2 spans 38 to 106; the sequence is LRNFLKKRLY…EVYLNIQEVR (69 aa).

It belongs to the universal ribosomal protein uS3 family. In terms of assembly, part of the 30S ribosomal subunit. Forms a tight complex with proteins S10 and S14.

In terms of biological role, binds the lower part of the 30S subunit head. Binds mRNA in the 70S ribosome, positioning it for translation. The polypeptide is Small ribosomal subunit protein uS3 (Citrifermentans bemidjiense (strain ATCC BAA-1014 / DSM 16622 / JCM 12645 / Bem) (Geobacter bemidjiensis)).